A 446-amino-acid chain; its full sequence is MLNPSRKLVELVRILDEGGFIFSGDPVQATEALRRVDGSTEEKIIRRAEMIDRNRMLRETLERVRAGSFWLWVVAATFAFFTGFSVTYLLMDNQGLNFFLVLAGVLGMNTLMLAVWLAMLFLRVKVGRFFSSPATWFRGKDPVNQAVLRLYADEWRQPSVRWKIGATSHSLWLCTLLGMLVSVLLLLLVRQYTFNWESTLLSNAASVRAVEMLAWLPSKLGFPVPDARAVIEGRLNGNIADARAWSGLLVGSIACYGILPRLLAWVVCKILLKTSENGLDLEKPYYQAVIRRWQNKITDADTRRETVSAVSPKIILNDAPKWAVMLETEWQDGEWFEGRLAQEWLDKGVATNREQVAALETELKQKPAQLLIGVRAQTVPDRGVLRQIVRLSEAAQGGAVVQLLAEQGLSDDLSEKLEHWRNALAECGAAWLEPDRAAQEGRLKDQ.

4 helical membrane-spanning segments follow: residues 69–89 (FWLWVVAATFAFFTGFSVTYL), 98–118 (FFLVLAGVLGMNTLMLAVWLA), 169–189 (HSLWLCTLLGMLVSVLLLLLV), and 247–267 (GLLVGSIACYGILPRLLAWVV).

It is found in the membrane. This is an uncharacterized protein from Neisseria meningitidis serogroup B (strain ATCC BAA-335 / MC58).